The primary structure comprises 635 residues: Histone-lysine N-methyltransferase Su(var)3-9 (635 aa).

Residues E81 to R188 are binds to Su(var)205 and Suvar(3)7. 2 disordered regions span residues R123 to G161 and S191 to I210. 2 stretches are compositionally biased toward low complexity: residues P128 to S139 and R147 to G161. Positions Y219 to A278 constitute a Chromo domain. Positions V410–G474 constitute a Pre-SET domain. Residues C412, C414, C421, C427, C428, C456, C460, C462, and C466 each contribute to the Zn(2+) site. The 127-residue stretch at V477–I603 folds into the SET domain. S-adenosyl-L-methionine is bound by residues S488–W490, Y531, and N560–H561. Residues C563, C623, C625, and C630 each coordinate Zn(2+). Residues V619 to F635 enclose the Post-SET domain.

It belongs to the class V-like SAM-binding methyltransferase superfamily. Histone-lysine methyltransferase family. Suvar3-9 subfamily. Interacts with Su(var)205 and Su(var)3-7. Probably associates with HDAC1/Rpd3. Interacts with Rrp6; the interaction promotes association of Rrp6 with a subset of genomic loci.

Its subcellular location is the nucleus. The protein resides in the chromosome. It is found in the centromere. It catalyses the reaction L-lysyl(9)-[histone H3] + 3 S-adenosyl-L-methionine = N(6),N(6),N(6)-trimethyl-L-lysyl(9)-[histone H3] + 3 S-adenosyl-L-homocysteine + 3 H(+). In terms of biological role, histone methyltransferase that specifically trimethylates 'Lys-9' of histone H3 using monomethylated H3 'Lys-9' as substrate. H3 'Lys-9' trimethylation represents a specific tag for epigenetic transcriptional repression by recruiting Su(var)205/HP1 to methylated histones. Mainly functions in heterochromatin regions, thereby playing a central role in the establishment of constitutive heterochromatin at pericentric regions. Involved in heterochromatic gene silencing including the modification of position-effect-variegation. The sequence is that of Histone-lysine N-methyltransferase Su(var)3-9 (Su(var)3-9) from Drosophila melanogaster (Fruit fly).